The following is a 513-amino-acid chain: ATP synthase subunit alpha (513 aa).

Residue 169–176 coordinates ATP; sequence GDRQCGKT.

This sequence belongs to the ATPase alpha/beta chains family. F-type ATPases have 2 components, CF(1) - the catalytic core - and CF(0) - the membrane proton channel. CF(1) has five subunits: alpha(3), beta(3), gamma(1), delta(1), epsilon(1). CF(0) has three main subunits: a(1), b(2) and c(9-12). The alpha and beta chains form an alternating ring which encloses part of the gamma chain. CF(1) is attached to CF(0) by a central stalk formed by the gamma and epsilon chains, while a peripheral stalk is formed by the delta and b chains.

It localises to the cell inner membrane. The catalysed reaction is ATP + H2O + 4 H(+)(in) = ADP + phosphate + 5 H(+)(out). Produces ATP from ADP in the presence of a proton gradient across the membrane. The alpha chain is a regulatory subunit. In Burkholderia mallei (strain NCTC 10229), this protein is ATP synthase subunit alpha.